A 276-amino-acid chain; its full sequence is 6-chlorohydroxyquinol 1,2-dioxygenase (276 aa).

The Fe cation site is built by tyrosine 157, tyrosine 191, histidine 215, and histidine 217.

It belongs to the intradiol ring-cleavage dioxygenase family. It depends on Fe(3+) as a cofactor.

It participates in aromatic compound metabolism. It functions in the pathway xenobiotic degradation. In terms of biological role, involved in the degradation of 2,4,6-trichlorophenol (2,4,6-TCP). May catalyze the oxidation of 6-chlorohydroxyquinol (6-CHQ) to 2-chloromaleylacetate (2-CMA). This chain is 6-chlorohydroxyquinol 1,2-dioxygenase, found in Cupriavidus pinatubonensis (strain JMP 134 / LMG 1197) (Cupriavidus necator (strain JMP 134)).